Here is a 542-residue protein sequence, read N- to C-terminus: Probable cysteine proteinase 361L (542 aa).

Residues C172, H382, and N414 contribute to the active site. A helical transmembrane segment spans residues 520-540 (TNNWYIYALIIIFILIIFFVL).

Belongs to the peptidase C1 family.

Its subcellular location is the membrane. Functionally, probable cysteine protease. In Acheta domesticus (House cricket), this protein is Probable cysteine proteinase 361L.